The sequence spans 289 residues: Lipoyl synthase 2 (289 aa).

Residues Cys-43, Cys-48, Cys-54, Cys-69, Cys-73, Cys-76, and Ser-282 each contribute to the [4Fe-4S] cluster site. In terms of domain architecture, Radical SAM core spans 55-271 (YAQKTATFLL…GAVARDLGFA (217 aa)).

Belongs to the radical SAM superfamily. Lipoyl synthase family. Requires [4Fe-4S] cluster as cofactor.

The protein localises to the cytoplasm. It carries out the reaction [[Fe-S] cluster scaffold protein carrying a second [4Fe-4S](2+) cluster] + N(6)-octanoyl-L-lysyl-[protein] + 2 oxidized [2Fe-2S]-[ferredoxin] + 2 S-adenosyl-L-methionine + 4 H(+) = [[Fe-S] cluster scaffold protein] + N(6)-[(R)-dihydrolipoyl]-L-lysyl-[protein] + 4 Fe(3+) + 2 hydrogen sulfide + 2 5'-deoxyadenosine + 2 L-methionine + 2 reduced [2Fe-2S]-[ferredoxin]. The protein operates within protein modification; protein lipoylation via endogenous pathway; protein N(6)-(lipoyl)lysine from octanoyl-[acyl-carrier-protein]: step 2/2. Catalyzes the radical-mediated insertion of two sulfur atoms into the C-6 and C-8 positions of the octanoyl moiety bound to the lipoyl domains of lipoate-dependent enzymes, thereby converting the octanoylated domains into lipoylated derivatives. In Gloeobacter violaceus (strain ATCC 29082 / PCC 7421), this protein is Lipoyl synthase 2.